A 319-amino-acid polypeptide reads, in one-letter code: uncharacterized protein (319 aa).

Residues 36–178 (IIEFLLSFKG…MTVIHEERGF (143 aa)) form the SIS domain. 51 to 56 (GIGKSG) provides a ligand contact to ATP. 2 CBS domains span residues 203 to 263 (MRSG…HLKT) and 268 to 319 (MTKN…MGVS).

The protein belongs to the SIS family. GutQ/KpsF subfamily.

This is an uncharacterized protein from Rickettsia prowazekii (strain Madrid E).